A 390-amino-acid chain; its full sequence is MENGNSSSDNKSSHKPIRCKAAVSRKAGEPLVMEEIMVAPPQPFEVRIRIICTALCHSDVTFWKLQVPPACFPRILGHEAIGVVESVGENVKEVVEGDTVLPTFMPDCGDCVDCKSHKSNLCSKFPFKVSPWMPRYDNSSRFTDLNGETLFHFLNVSSFSEYTVLDVANVVKIDSSIPPSRACLLSCGVSTGVGAAWETAKVEKGSTVVIFGLGSIGLAVAEGARLCGASRIIGVDINPTKFQVGQKFGVTEFVNSMTCEKNRVSEVINEMTDGGADYCFECVGSSSLVQEAYACCRQGWGKTITLGVDKPGSQICLDSFDVLHHGKILMGSLFGGLKAKTHIPILLKRYLSNELELDKFVTHEMKFEEINDAFQLLLEGKCIRCVLWMG.

Zn(2+) is bound by residues Cys-56, Ser-58, His-78, Cys-108, Cys-111, Cys-114, Cys-122, and Cys-187. Residues Ser-58 and His-78 each coordinate an alcohol. Ser-58 is a binding site for NAD(+). NAD(+)-binding positions include 212-217 (GLGSIG), Asp-236, Lys-241, 306-308 (LGV), Phe-334, and Arg-384.

Belongs to the zinc-containing alcohol dehydrogenase family. Class-III subfamily. Homodimer. Zn(2+) serves as cofactor.

It is found in the cytoplasm. The catalysed reaction is a primary alcohol + NAD(+) = an aldehyde + NADH + H(+). It carries out the reaction a secondary alcohol + NAD(+) = a ketone + NADH + H(+). This Arabidopsis thaliana (Mouse-ear cress) protein is Alcohol dehydrogenase-like 7.